We begin with the raw amino-acid sequence, 31 residues long: Photosystem I reaction center subunit XII (31 aa).

Residues 7-26 (QVYVALVIALLPAVLAFRLS) form a helical membrane-spanning segment.

This sequence belongs to the PsaM family.

The protein localises to the cellular thylakoid membrane. The protein is Photosystem I reaction center subunit XII of Thermosynechococcus vestitus (strain NIES-2133 / IAM M-273 / BP-1).